Reading from the N-terminus, the 57-residue chain is UPF0391 membrane protein RPB_2024 (57 aa).

2 consecutive transmembrane segments (helical) span residues 4–24 (WVVT…GGIA) and 30–50 (IAKV…VVGL).

Belongs to the UPF0391 family.

The protein resides in the cell membrane. This Rhodopseudomonas palustris (strain HaA2) protein is UPF0391 membrane protein RPB_2024.